The chain runs to 327 residues: Transcription factor bHLH71 (327 aa).

Disordered regions lie at residues 46 to 88 (ISEI…NQRM) and 151 to 176 (AKLNQSVTSSTSQDSNGEQENPHQPS). A compositionally biased stretch (basic residues) spans 65-76 (RGKKRRRRKPRV). The span at 77-88 (CKNEEEAENQRM) shows a compositional bias: basic and acidic residues. Residues 85 to 136 (NQRMTHIAVERNRRRQMNQHLSVLRSLMPQPFAHKGDQASIVGGAIDFIKEL) form the bHLH domain. Positions 152-169 (KLNQSVTSSTSQDSNGEQ) are enriched in polar residues.

In terms of assembly, homodimer. Interacts with FAMA. Expressed in leaves, stems, and flowers.

It is found in the nucleus. Its function is as follows. Transcription factor. May be involved in the differentiation of stomatal guard cells. The polypeptide is Transcription factor bHLH71 (BHLH71) (Arabidopsis thaliana (Mouse-ear cress)).